The primary structure comprises 118 residues: Small ribosomal subunit protein mS41 (118 aa).

A mitochondrion-targeting transit peptide spans 1-24 (MLRVVAKAQYPAAVRCFSTSHAAF).

This sequence belongs to the mitochondrion-specific ribosomal protein mS41 family.

It localises to the mitochondrion. In terms of biological role, involved in telomere length regulation. This chain is Small ribosomal subunit protein mS41 (FYV4), found in Yarrowia lipolytica (strain CLIB 122 / E 150) (Yeast).